The sequence spans 218 residues: Ras-related protein Rab-27B (218 aa).

Threonine 2 carries the N-acetylthreonine modification. 16 to 24 (GDSGVGKTT) contacts GTP. An Effector region motif is present at residues 38-46 (FITTVGIDF). Residues 74–78 (DTAGQ), 133–136 (NKAD), and 163–165 (SAA) each bind GTP. Residues cysteine 123 and cysteine 188 are joined by a disulfide bond. Residues 194–218 (IPDTVNGGNSGNLDGEKPPEKKCIC) are disordered. Basic and acidic residues predominate over residues 207-218 (DGEKPPEKKCIC). 2 S-geranylgeranyl cysteine lipidation sites follow: cysteine 216 and cysteine 218. Cysteine methyl ester is present on cysteine 218.

This sequence belongs to the small GTPase superfamily. Rab family. As to quaternary structure, interacts with SYTL2, SYTL4, MYRIP and MLPH. Interacts with RPH3A and RPH3A. Interacts (GDP-bound form preferentially) with DENND10. In terms of tissue distribution, expressed primarily in testis.

It is found in the membrane. Its subcellular location is the late endosome. It catalyses the reaction GTP + H2O = GDP + phosphate + H(+). With respect to regulation, regulated by guanine nucleotide exchange factors (GEFs) which promote the exchange of bound GDP for free GTP, GTPase activating proteins (GAPs) which increase the GTP hydrolysis activity, and GDP dissociation inhibitors which inhibit the dissociation of the nucleotide from the GTPase. Activated by GEFs such as DENND10. In terms of biological role, small GTPase which cycles between active GTP-bound and inactive GDP-bound states. In its active state, binds to a variety of effector proteins to regulate homeostasis of late endocytic pathway, including endosomal positioning, maturation and secretion. Plays a role in NTRK2/TRKB axonal anterograde transport by facilitating the association of NTRK2/TRKB with KLC1. May be involved in targeting uroplakins to urothelial apical membranes. The chain is Ras-related protein Rab-27B (RAB27B) from Homo sapiens (Human).